A 479-amino-acid polypeptide reads, in one-letter code: Ribosomal RNA small subunit methyltransferase F (479 aa).

Residues 125–131 (AAAPGSK), Glu-149, Asp-176, and Asp-194 each bind S-adenosyl-L-methionine. The Nucleophile role is filled by Cys-247.

Belongs to the class I-like SAM-binding methyltransferase superfamily. RsmB/NOP family.

The protein resides in the cytoplasm. It carries out the reaction cytidine(1407) in 16S rRNA + S-adenosyl-L-methionine = 5-methylcytidine(1407) in 16S rRNA + S-adenosyl-L-homocysteine + H(+). In terms of biological role, specifically methylates the cytosine at position 1407 (m5C1407) of 16S rRNA. The protein is Ribosomal RNA small subunit methyltransferase F of Salmonella schwarzengrund (strain CVM19633).